Here is a 796-residue protein sequence, read N- to C-terminus: ATP-dependent DNA helicase PIF6 (796 aa).

A disordered region spans residues 197 to 230; it reads RPTGLPSAHSGGKLPKHMGGDELNPQLEGSTTPG. 255-262 lines the ATP pocket; the sequence is GSAGTGKT. A DNA-binding region spans residues 636-655; sequence QAYVALSRVRSREDLMLTAF. Disordered stretches follow at residues 692–719 and 762–796; these read KGKTRAKHPRSQGEKNSVDEGGNAPEEH and TSSAIPNFTQESNNGDANSQLQHPFSQNNLMVDDD.

The protein belongs to the helicase family. PIF1 subfamily. Monomer. It depends on Mg(2+) as a cofactor.

The protein resides in the nucleus. It catalyses the reaction Couples ATP hydrolysis with the unwinding of duplex DNA at the replication fork by translocating in the 5'-3' direction. This creates two antiparallel DNA single strands (ssDNA). The leading ssDNA polymer is the template for DNA polymerase III holoenzyme which synthesizes a continuous strand.. It carries out the reaction ATP + H2O = ADP + phosphate + H(+). Its function is as follows. DNA-dependent ATPase and 5'-3' DNA helicase required for the maintenance of genome stability. The sequence is that of ATP-dependent DNA helicase PIF6 from Trypanosoma brucei brucei (strain 927/4 GUTat10.1).